The sequence spans 100 residues: Integration host factor subunit alpha (100 aa).

The protein belongs to the bacterial histone-like protein family. Heterodimer of an alpha and a beta chain.

Functionally, this protein is one of the two subunits of integration host factor, a specific DNA-binding protein that functions in genetic recombination as well as in transcriptional and translational control. The sequence is that of Integration host factor subunit alpha from Alcanivorax borkumensis (strain ATCC 700651 / DSM 11573 / NCIMB 13689 / SK2).